Consider the following 542-residue polypeptide: Carboxypeptidase Y (542 aa).

The first 21 residues, 1-21 (MKLSKSTLIATLALTATSTNA), serve as a signal peptide directing secretion. Positions 22-127 (LVVQNPFSNI…DAQVPNHKLR (106 aa)) are excised as a propeptide. 5 cysteine pairs are disulfide-bonded: Cys182/Cys421, Cys316/Cys330, Cys340/Cys363, Cys347/Cys356, and Cys385/Cys391. A glycan (N-linked (GlcNAc...) asparagine) is linked at Asn213. Ser269 is an active-site residue. Asn291 is a glycosylation site (N-linked (GlcNAc...) asparagine). Asp461 is an active-site residue. Residue Cys464 participates in substrate binding. His518 is a catalytic residue. A substrate-binding site is contributed by Met519.

The protein belongs to the peptidase S10 family.

The protein localises to the vacuole. The catalysed reaction is Release of a C-terminal amino acid with broad specificity.. Its function is as follows. Involved in degradation of small peptides. This is Carboxypeptidase Y (CPY1) from Candida albicans (Yeast).